Consider the following 387-residue polypeptide: Phosphoglycerate kinase (387 aa).

Substrate-binding positions include 21–23 (DLN), arginine 36, 59–62 (HLGR), arginine 114, and arginine 147. Residues lysine 198, glutamate 314, and 340–343 (GGDT) contribute to the ATP site.

This sequence belongs to the phosphoglycerate kinase family. Monomer.

The protein localises to the cytoplasm. The enzyme catalyses (2R)-3-phosphoglycerate + ATP = (2R)-3-phospho-glyceroyl phosphate + ADP. It participates in carbohydrate degradation; glycolysis; pyruvate from D-glyceraldehyde 3-phosphate: step 2/5. This is Phosphoglycerate kinase from Erwinia tasmaniensis (strain DSM 17950 / CFBP 7177 / CIP 109463 / NCPPB 4357 / Et1/99).